Consider the following 201-residue polypeptide: UPF0301 protein Arad_1256 (201 aa).

It belongs to the UPF0301 (AlgH) family.

In Rhizobium rhizogenes (strain K84 / ATCC BAA-868) (Agrobacterium radiobacter), this protein is UPF0301 protein Arad_1256.